A 118-amino-acid chain; its full sequence is Large ribosomal subunit protein uL18 (118 aa).

The protein belongs to the universal ribosomal protein uL18 family. As to quaternary structure, part of the 50S ribosomal subunit; part of the 5S rRNA/L5/L18/L25 subcomplex. Contacts the 5S and 23S rRNAs.

This is one of the proteins that bind and probably mediate the attachment of the 5S RNA into the large ribosomal subunit, where it forms part of the central protuberance. The sequence is that of Large ribosomal subunit protein uL18 from Brachyspira hyodysenteriae (strain ATCC 49526 / WA1).